Here is a 159-residue protein sequence, read N- to C-terminus: Ribosomal RNA large subunit methyltransferase H (159 aa).

S-adenosyl-L-methionine is bound by residues leucine 76, glycine 108, and 127–132; that span reads FSKMTF.

It belongs to the RNA methyltransferase RlmH family. As to quaternary structure, homodimer.

The protein localises to the cytoplasm. It carries out the reaction pseudouridine(1915) in 23S rRNA + S-adenosyl-L-methionine = N(3)-methylpseudouridine(1915) in 23S rRNA + S-adenosyl-L-homocysteine + H(+). In terms of biological role, specifically methylates the pseudouridine at position 1915 (m3Psi1915) in 23S rRNA. The protein is Ribosomal RNA large subunit methyltransferase H of Lachnoclostridium phytofermentans (strain ATCC 700394 / DSM 18823 / ISDg) (Clostridium phytofermentans).